A 783-amino-acid polypeptide reads, in one-letter code: Putative ATP-dependent DNA helicase fml2 (783 aa).

Positions 118 to 286 (FCEQALFHNL…KVVDCLHISK (169 aa)) constitute a Helicase ATP-binding domain. Residue 131–138 (LPTGLGKT) participates in ATP binding. Positions 234 to 237 (DEAH) match the DEAH box motif. The Helicase C-terminal domain maps to 450–619 (KMNHLLELLK…GKKIALKKDV (170 aa)).

It belongs to the DEAD box helicase family. DEAH subfamily. FANCM sub-subfamily.

The protein resides in the nucleus. It is found in the nucleolus. It catalyses the reaction ATP + H2O = ADP + phosphate + H(+). This Schizosaccharomyces pombe (strain 972 / ATCC 24843) (Fission yeast) protein is Putative ATP-dependent DNA helicase fml2.